Here is a 436-residue protein sequence, read N- to C-terminus: Chorion-specific transcription factor GCMa (436 aa).

The GCM DNA-binding region spans 14-169 (LSWDINDMKL…KLEAEARRAM (156 aa)). 8 residues coordinate Zn(2+): Cys76, Cys82, Cys86, Cys113, Cys116, Cys125, His152, and His154.

In terms of processing, polyubiquitinated in the presence of UBE2D2 and FBXW2 (in vitro).

It localises to the nucleus. Functionally, transcription factor involved in the control of expression of placental growth factor (PGF) and other placenta-specific genes. Binds to the trophoblast-specific element 2 (TSE2) of the aromatase gene enhancer. Binds to the SYDE1 promoter. Has a central role in mediating the differentiation of trophoblast cells along both the villous and extravillous pathways in placental development. This is Chorion-specific transcription factor GCMa (Gcm1) from Rattus norvegicus (Rat).